Here is a 685-residue protein sequence, read N- to C-terminus: MLISSYNQVLVAFSLIVAILASYTALDMAGRVTLAKGREALSWLIGGAFAMGFGIWSMHFVGMLAFSLPIPLGYDLGLTLLSLLLAVGSSAFALWLVCQAELPWQRLALGALLMGSGIAAMHYTGMAALLMMPGIVYDPLWLGLSILIAVIASGAALWIAFRLRHGSRRIVLVRAGAALVMGCAIVGMHYTGMAAAQFPLGSFCGAAGRGIDNGWLAVLVIVITLAVIAIALIVSVLDSRLEARTSVLATSLARANRELIQLALHDNLTKLPNRMLLDDRLEQAIQQAIRDDRRFAVLFMDLDGFKAVNDAYGHHLGDLLLIEVAERIRANVRAQDTIARLGGDEFVLLIEAREPADAATLAEKLVKRISQPYQISRHEVRISASIGIALYPGDGQTRHELMINADAAMYHAKDQGRNGYCFFESSMNANAQEQLQLLHDLRQALERRQLVLHYQPKVLAPNGPMIGVEALLRWEHPQHGLITPGQFLPLAEKTGLIVQIGEWVLDEACRQMRLWLDGGHADWNIAVNLSALQFAHAGLVDSVRNALLRHSLEPSHLILEVTESTAMRDADASLVILEQLSAMGVGISIDDFGTGYSSLLYLKRLPASELKIDRGFINELAHDSDDAAIVSAIVALGRTLNLKIVAEGVETEAQQEFLTRLGCNSLQGFLLGRPMPAEQLLASVA.

In terms of domain architecture, MHYT spans 6 to 199 (YNQVLVAFSL…YTGMAAAQFP (194 aa)). The next 7 membrane-spanning stretches (helical) occupy residues 9–29 (VLVA…LDMA), 44–64 (LIGG…VGML), 77–97 (GLTL…LWLV), 117–137 (GIAA…GIVY), 141–161 (WLGL…WIAF), 175–195 (AGAA…GMAA), and 214–234 (GWLA…ALIV). At 235–685 (SVLDSRLEAR…PAEQLLASVA (451 aa)) the chain is on the cytoplasmic side. Positions 293–425 (RRFAVLFMDL…GRNGYCFFES (133 aa)) constitute a GGDEF domain. The region spanning 434–685 (QLQLLHDLRQ…PAEQLLASVA (252 aa)) is the EAL domain. 3',3'-c-di-GMP contacts are provided by Q455, E469, L472, R473, N528, and Q533. E469 provides a ligand contact to Mg(2+). Position 528 (N528) interacts with Mg(2+). Mg(2+) is bound by residues E560, D590, and D591. D590 lines the 3',3'-c-di-GMP pocket. A 3',3'-c-di-GMP-binding site is contributed by R614. E647 lines the Mg(2+) pocket. Residues E650 and F669 each contribute to the 3',3'-c-di-GMP site.

Homodimer. The cofactor is Mg(2+).

The protein resides in the cell inner membrane. The enzyme catalyses 2 GTP = 3',3'-c-di-GMP + 2 diphosphate. The catalysed reaction is 3',3'-c-di-GMP + H2O = 5'-phosphoguanylyl(3'-&gt;5')guanosine + H(+). Functionally, displays both diguanylate cyclase (DGC) and c-di-GMP-specific phosphodiesterase (PDE) activity. Probably modulates DGC and PDE activities, and thus c-di-GMP levels, in a growth mode-dependent manner. May act as a PDE under planktonic growth conditions and as a DGC in biofilms. During biofilm formation, it specifically activates alginate biosynthesis via generation of a localized c-di-GMP pool in the vicinity of the alginate biosynthesis protein Alg44. This chain is Bifunctional diguanylate cyclase/cyclic di-GMP phosphodiesterase MucR, found in Pseudomonas aeruginosa (strain ATCC 15692 / DSM 22644 / CIP 104116 / JCM 14847 / LMG 12228 / 1C / PRS 101 / PAO1).